The primary structure comprises 852 residues: Zinc finger and SCAN domain-containing protein 29 (852 aa).

One can recognise an SCAN box domain in the interval 18-100 (RQRFRRFHYQ…TLVEDLEREP (83 aa)). Disordered regions lie at residues 96-182 (LERE…PKSG), 347-400 (ASHS…SAAP), and 502-557 (PNDG…RAPV). Residue lysine 112 forms a Glycyl lysine isopeptide (Lys-Gly) (interchain with G-Cter in SUMO2) linkage. Residue serine 153 is modified to Phosphoserine. Residue lysine 180 forms a Glycyl lysine isopeptide (Lys-Gly) (interchain with G-Cter in SUMO2) linkage. Polar residues predominate over residues 508-517 (ETASCPVQGT). Residues 528–545 (EADEATEEDSDDDEEDTE) are compositionally biased toward acidic residues. Residue serine 561 is modified to Phosphoserine. Residue lysine 576 forms a Glycyl lysine isopeptide (Lys-Gly) (interchain with G-Cter in SUMO2) linkage. A disordered region spans residues 603–625 (QGKGNESDCRSGRQWAKTSGEKR). Residue lysine 652 forms a Glycyl lysine isopeptide (Lys-Gly) (interchain with G-Cter in SUMO2) linkage. 6 C2H2-type zinc fingers span residues 678-700 (YKCA…RRIH), 706-728 (YKCL…RRIH), 734-756 (YQCG…QRTH), 762-784 (YQCE…RRIH), 790-812 (HVCP…HRTH), and 818-840 (YGCH…GEIH).

The protein belongs to the krueppel C2H2-type zinc-finger protein family.

The protein localises to the nucleus. Its function is as follows. May be involved in transcriptional regulation. The sequence is that of Zinc finger and SCAN domain-containing protein 29 (ZSCAN29) from Homo sapiens (Human).